The primary structure comprises 692 residues: Polyribonucleotide nucleotidyltransferase (692 aa).

Residues Asp-484 and Asp-490 each coordinate Mg(2+). The 64-residue stretch at 551-614 (PKYFIHKISQ…ALVERVKSIT (64 aa)) folds into the KH domain. Residues 620–688 (GAVYTGKVKT…NRGRIRLSRK (69 aa)) enclose the S1 motif domain.

This sequence belongs to the polyribonucleotide nucleotidyltransferase family. Mg(2+) serves as cofactor.

It localises to the cytoplasm. The enzyme catalyses RNA(n+1) + phosphate = RNA(n) + a ribonucleoside 5'-diphosphate. Functionally, involved in mRNA degradation. Catalyzes the phosphorolysis of single-stranded polyribonucleotides processively in the 3'- to 5'-direction. This is Polyribonucleotide nucleotidyltransferase from Desulfotalea psychrophila (strain LSv54 / DSM 12343).